A 349-amino-acid polypeptide reads, in one-letter code: MDDLENNIFNSVEEEIIYWKSVAMKYKTCSEEAQQELQEFQEASREYEAELEAQLQQIEGRNRDLFSENNRLRMELDGIKEKYEEQHSENYVQICSLEGDLSQTKAVRDQLQKYIRELEQANDDLERAKRATIMSLEDFEQRLNQAIERNAFLESELDEKENLLESVQRLKDEARDLRQELAVQQKQEKPKSNMGSPETERMDTSVKASVAIPSAPLTPLSQRGCASTLTSPLSFRTSLDDGYSGTPLTPCARISALNIVGDLLRKVGALESKLASCRNFVHEQSPNRPLTSVSARMNKTREGIENRLSMASGSSVEKGLIKRLEFGSLPSNTPVQGMHSPQGVVKMII.

The stretch at 23 to 189 forms a coiled coil; sequence AMKYKTCSEE…ELAVQQKQEK (167 aa). The disordered stretch occupies residues 182-201; it reads AVQQKQEKPKSNMGSPETER.

The protein belongs to the nudE family. Self-associates. Interacts with pafah1b1. Phosphorylated in mitosis.

It localises to the cytoplasm. The protein resides in the cytoskeleton. It is found in the microtubule organizing center. Its subcellular location is the centrosome. The protein localises to the spindle. It localises to the chromosome. The protein resides in the centromere. It is found in the kinetochore. Its subcellular location is the cleavage furrow. The protein localises to the cytoplasmic vesicle membrane. Functionally, required for centrosome duplication and formation and function of the mitotic spindle. This chain is Nuclear distribution protein nudE homolog 1 (nde1), found in Xenopus tropicalis (Western clawed frog).